Here is a 208-residue protein sequence, read N- to C-terminus: Small ribosomal subunit protein uS4 (208 aa).

The S4 RNA-binding domain occupies 98-161 (RRLDNVVYRL…KASPRIKELV (64 aa)).

It belongs to the universal ribosomal protein uS4 family. As to quaternary structure, part of the 30S ribosomal subunit. Contacts protein S5. The interaction surface between S4 and S5 is involved in control of translational fidelity.

In terms of biological role, one of the primary rRNA binding proteins, it binds directly to 16S rRNA where it nucleates assembly of the body of the 30S subunit. Functionally, with S5 and S12 plays an important role in translational accuracy. The sequence is that of Small ribosomal subunit protein uS4 from Desulforamulus reducens (strain ATCC BAA-1160 / DSM 100696 / MI-1) (Desulfotomaculum reducens).